The sequence spans 124 residues: Urotensin-2 (124 aa).

An N-terminal signal peptide occupies residues 1–20 (MYKLASCCLLFIGFLNPLLS). Positions 21 to 110 (LPLLDSREIS…HLLARIWKPY (90 aa)) are excised as a propeptide. A disulfide bridge links Cys-118 with Cys-123.

It belongs to the urotensin-2 family. In terms of tissue distribution, brain specific.

Its subcellular location is the secreted. In terms of biological role, highly potent vasoconstrictor. The protein is Urotensin-2 (UTS2) of Homo sapiens (Human).